The chain runs to 423 residues: L-cysteine:1D-myo-inositol 2-amino-2-deoxy-alpha-D-glucopyranoside ligase (423 aa).

Cys-45 serves as a coordination point for Zn(2+). L-cysteinyl-5'-AMP-binding positions include Cys-45 to Thr-48, Thr-60, and Asn-83 to Thr-85. The 'HIGH' region signature appears at Ile-47 to His-57. The 'ERGGDP' region motif lies at Asp-197–Pro-202. Trp-238 provides a ligand contact to L-cysteinyl-5'-AMP. Residue Cys-242 participates in Zn(2+) binding. Position 260–262 (Gly-260–Asp-262) interacts with L-cysteinyl-5'-AMP. Zn(2+) is bound at residue His-267. Ile-294 is a binding site for L-cysteinyl-5'-AMP. A 'KMSKS' region motif is present at residues Lys-300–Ser-304.

Belongs to the class-I aminoacyl-tRNA synthetase family. MshC subfamily. In terms of assembly, monomer. Zn(2+) serves as cofactor.

The enzyme catalyses 1D-myo-inositol 2-amino-2-deoxy-alpha-D-glucopyranoside + L-cysteine + ATP = 1D-myo-inositol 2-(L-cysteinylamino)-2-deoxy-alpha-D-glucopyranoside + AMP + diphosphate + H(+). Functionally, catalyzes the ATP-dependent condensation of GlcN-Ins and L-cysteine to form L-Cys-GlcN-Ins. This chain is L-cysteine:1D-myo-inositol 2-amino-2-deoxy-alpha-D-glucopyranoside ligase, found in Jonesia denitrificans (strain ATCC 14870 / DSM 20603 / BCRC 15368 / CIP 55.134 / JCM 11481 / NBRC 15587 / NCTC 10816 / Prevot 55134) (Listeria denitrificans).